A 229-amino-acid chain; its full sequence is GTP cyclohydrolase 1 (229 aa).

A disordered region spans residues 1–26; the sequence is MDAKIKPIRGTNPAEGRPEFQPAELE. Zn(2+) is bound by residues Cys-118, His-121, and Cys-189.

This sequence belongs to the GTP cyclohydrolase I family. As to quaternary structure, toroid-shaped homodecamer, composed of two pentamers of five dimers.

The catalysed reaction is GTP + H2O = 7,8-dihydroneopterin 3'-triphosphate + formate + H(+). Its pathway is cofactor biosynthesis; 7,8-dihydroneopterin triphosphate biosynthesis; 7,8-dihydroneopterin triphosphate from GTP: step 1/1. The sequence is that of GTP cyclohydrolase 1 from Rhodopseudomonas palustris (strain ATCC BAA-98 / CGA009).